A 330-amino-acid polypeptide reads, in one-letter code: Solute carrier family 25 member 16 (330 aa).

Solcar repeat units lie at residues 32-118 (FYWL…YKTL), 126-214 (SGHV…LKSV), and 236-326 (LKTH…MKQF). The next 6 membrane-spanning stretches (helical) occupy residues 33 to 52 (YWLR…KTTV), 95 to 112 (GAMM…FMAF), 132 to 149 (LMAG…TYPL), 189 to 209 (GLMP…FTFG), 242 to 262 (LLCG…FDVT), and 297 to 317 (GLYR…AVAF).

It belongs to the mitochondrial carrier (TC 2.A.29) family. Mostly in thyroid, liver, lung, kidney and to a lesser extent in heart and skeletal muscle.

The protein resides in the mitochondrion inner membrane. Functionally, may be involved in the transport of coenzyme A in the mitochondrial matrix. Very little is known about the physiological function of this carrier. The chain is Solute carrier family 25 member 16 (SLC25A16) from Bos taurus (Bovine).